A 187-amino-acid polypeptide reads, in one-letter code: Inosine triphosphate pyrophosphatase (187 aa).

11–16 (TSNKNK) contacts ITP. Glutamate 39 is a Mg(2+) binding site. ITP is bound by residues lysine 51, 67 to 68 (DT), lysine 84, 143 to 146 (FGWD), lysine 164, and 169 to 170 (HR).

This sequence belongs to the HAM1 NTPase family. In terms of assembly, homodimer. It depends on Mg(2+) as a cofactor. Requires Mn(2+) as cofactor.

Its subcellular location is the cytoplasm. The protein resides in the nucleus. It carries out the reaction ITP + H2O = IMP + diphosphate + H(+). It catalyses the reaction dITP + H2O = dIMP + diphosphate + H(+). The catalysed reaction is XTP + H2O = XMP + diphosphate + H(+). Pyrophosphatase that hydrolyzes non-canonical purine nucleotides such as inosine triphosphate (ITP), deoxyinosine triphosphate (dITP) or xanthosine 5'-triphosphate (XTP) to their respective monophosphate derivatives. The enzyme does not distinguish between the deoxy- and ribose forms. Probably excludes non-canonical purines from RNA and DNA precursor pools, thus preventing their incorporation into RNA and DNA and avoiding chromosomal lesions. The polypeptide is Inosine triphosphate pyrophosphatase (Aspergillus fumigatus (strain ATCC MYA-4609 / CBS 101355 / FGSC A1100 / Af293) (Neosartorya fumigata)).